We begin with the raw amino-acid sequence, 85 residues long: Ice-structuring protein 4 (85 aa).

Residues 1–21 (MRITEANPDPDAKAVPAAAAP) form the signal peptide.

It belongs to the type-I AFP family.

The protein localises to the secreted. In terms of biological role, contributes to protect fish blood from freezing at subzero sea water temperatures. Lowers the blood freezing point. Binds to nascent ice crystals and prevents further growth. The chain is Ice-structuring protein 4 from Pseudopleuronectes americanus (Winter flounder).